A 268-amino-acid chain; its full sequence is Indole-3-glycerol phosphate synthase (268 aa).

This sequence belongs to the TrpC family.

The enzyme catalyses 1-(2-carboxyphenylamino)-1-deoxy-D-ribulose 5-phosphate + H(+) = (1S,2R)-1-C-(indol-3-yl)glycerol 3-phosphate + CO2 + H2O. The protein operates within amino-acid biosynthesis; L-tryptophan biosynthesis; L-tryptophan from chorismate: step 4/5. The chain is Indole-3-glycerol phosphate synthase from Parafrankia sp. (strain EAN1pec).